A 355-amino-acid chain; its full sequence is DNA polymerase IV (355 aa).

The UmuC domain occupies isoleucine 7 to glycine 188. Mg(2+) contacts are provided by aspartate 11 and aspartate 106. Glutamate 107 is a catalytic residue.

This sequence belongs to the DNA polymerase type-Y family. Monomer. Mg(2+) is required as a cofactor.

The protein localises to the cytoplasm. The enzyme catalyses DNA(n) + a 2'-deoxyribonucleoside 5'-triphosphate = DNA(n+1) + diphosphate. Poorly processive, error-prone DNA polymerase involved in untargeted mutagenesis. Copies undamaged DNA at stalled replication forks, which arise in vivo from mismatched or misaligned primer ends. These misaligned primers can be extended by PolIV. Exhibits no 3'-5' exonuclease (proofreading) activity. May be involved in translesional synthesis, in conjunction with the beta clamp from PolIII. The sequence is that of DNA polymerase IV from Legionella pneumophila subsp. pneumophila (strain Philadelphia 1 / ATCC 33152 / DSM 7513).